The following is a 172-amino-acid chain: Protein GrpE (172 aa).

The segment at 1–23 is disordered; that stretch reads MNQDHPECDSEELTQNSPETDPL.

Belongs to the GrpE family. As to quaternary structure, homodimer.

Its subcellular location is the cytoplasm. In terms of biological role, participates actively in the response to hyperosmotic and heat shock by preventing the aggregation of stress-denatured proteins, in association with DnaK and GrpE. It is the nucleotide exchange factor for DnaK and may function as a thermosensor. Unfolded proteins bind initially to DnaJ; upon interaction with the DnaJ-bound protein, DnaK hydrolyzes its bound ATP, resulting in the formation of a stable complex. GrpE releases ADP from DnaK; ATP binding to DnaK triggers the release of the substrate protein, thus completing the reaction cycle. Several rounds of ATP-dependent interactions between DnaJ, DnaK and GrpE are required for fully efficient folding. In Xylella fastidiosa (strain 9a5c), this protein is Protein GrpE.